The chain runs to 128 residues: MRMYETIFIVQPDLGEEELKGISARVQEVIVSMKGELKRLEDWGARKLAYPIEKFNRGRYYYLRFDGDAALIAELERRLRLNDKIIRYQSVKLEKEAPAAAAIPAKVTEEEPVEAAPEAKVETTTEEE.

The tract at residues 105-128 (AKVTEEEPVEAAPEAKVETTTEEE) is disordered. Residues 117–128 (PEAKVETTTEEE) are compositionally biased toward basic and acidic residues.

It belongs to the bacterial ribosomal protein bS6 family.

In terms of biological role, binds together with bS18 to 16S ribosomal RNA. In Geotalea daltonii (strain DSM 22248 / JCM 15807 / FRC-32) (Geobacter daltonii), this protein is Small ribosomal subunit protein bS6.